We begin with the raw amino-acid sequence, 349 residues long: Glycerol-3-phosphate dehydrogenase [NAD(P)+] (349 aa).

Residues W16, R36, and K110 each contribute to the NADPH site. K110, G138, and T140 together coordinate sn-glycerol 3-phosphate. A142 serves as a coordination point for NADPH. Positions 193, 246, 256, 257, and 258 each coordinate sn-glycerol 3-phosphate. Residue K193 is the Proton acceptor of the active site. R257 lines the NADPH pocket. Positions 281 and 283 each coordinate NADPH.

The protein belongs to the NAD-dependent glycerol-3-phosphate dehydrogenase family.

The protein resides in the cytoplasm. The catalysed reaction is sn-glycerol 3-phosphate + NAD(+) = dihydroxyacetone phosphate + NADH + H(+). It carries out the reaction sn-glycerol 3-phosphate + NADP(+) = dihydroxyacetone phosphate + NADPH + H(+). The protein operates within membrane lipid metabolism; glycerophospholipid metabolism. Functionally, catalyzes the reduction of the glycolytic intermediate dihydroxyacetone phosphate (DHAP) to sn-glycerol 3-phosphate (G3P), the key precursor for phospholipid synthesis. The chain is Glycerol-3-phosphate dehydrogenase [NAD(P)+] from Rhodospirillum rubrum (strain ATCC 11170 / ATH 1.1.1 / DSM 467 / LMG 4362 / NCIMB 8255 / S1).